The primary structure comprises 299 residues: Taste receptor type 2 member 42 (299 aa).

At 1–7 (MATELDK) the chain is on the extracellular side. Residues 8–28 (IFLILAIAEFIISMLGNVFIG) traverse the membrane as a helical segment. The Cytoplasmic segment spans residues 29–50 (LVNCSEGIKNQKVFSSDFILTS). A helical transmembrane segment spans residues 51-71 (LAISTIGQLLVILFDSFLVGL). Residues 72-101 (ASHLYTTYRLGKPVIMLWHMTNHLTTWLAT) are Extracellular-facing. A helical transmembrane segment spans residues 102 to 122 (CLSVFYFFKIAHFPHSLFLWL). The Cytoplasmic segment spans residues 123-127 (RWRMN). The helical transmembrane segment at 128-148 (GMIAMLLILSLFLLIFDSSVL) threads the bilayer. The Extracellular segment spans residues 149–187 (EIFIDISLNIIDKSSLTLYLDESKTLYDKLSILKTLLSL). The chain crosses the membrane as a helical span at residues 188-208 (TSFIPFSLSLTSVLFLYLSLV). Residues 209–238 (RHTRNLKLSSLGSRDSSTEAHRRAMKMVMS) lie on the Cytoplasmic side of the membrane. Residues 239–259 (FLFLFIVHFFSLQVANWIFFM) traverse the membrane as a helical segment. Residues 260–265 (LWNNKY) are Extracellular-facing. The helical transmembrane segment at 266 to 286 (IKFVMLALNAFPSCHSFILIL) threads the bilayer. Topologically, residues 287–299 (GNSKLRQTAVRLL) are cytoplasmic.

Belongs to the G-protein coupled receptor T2R family.

It localises to the membrane. Functionally, receptor that may play a role in the perception of bitterness and is gustducin-linked. May play a role in sensing the chemical composition of the gastrointestinal content. The activity of this receptor may stimulate alpha gustducin, mediate PLC-beta-2 activation and lead to the gating of TRPM5. The polypeptide is Taste receptor type 2 member 42 (TAS2R42) (Gorilla gorilla gorilla (Western lowland gorilla)).